The sequence spans 257 residues: ATP synthase delta chain, chloroplastic (257 aa).

A chloroplast-targeting transit peptide spans 1-70 (MAALQNPVAL…PRGGALGTRM (70 aa)).

Belongs to the ATPase delta chain family. F-type ATPases have 2 components, CF(1) - the catalytic core - and CF(0) - the membrane proton channel. CF(1) has five subunits: alpha(3), beta(3), gamma(1), delta(1), epsilon(1). CF(0) has three main subunits: a, b and c.

The protein localises to the plastid. It is found in the chloroplast thylakoid membrane. This protein seems to be part of the stalk that links CF(0) to CF(1). It either transmits conformational changes from CF(0) into CF(1) or is implicated in proton conduction. The protein is ATP synthase delta chain, chloroplastic (ATPD) of Spinacia oleracea (Spinach).